The chain runs to 338 residues: TPR repeat-containing protein MJ0941 (338 aa).

8 TPR repeats span residues 27 to 62 (LEAV…EPDF), 63 to 96 (YLAL…ESKN), 97 to 130 (PITW…ENRF), 131 to 164 (LSAF…TPNF), 165 to 198 (VPMW…KPHD), 199 to 232 (KNAL…LNVK), 268 to 301 (VALW…QPHY), and 302 to 335 (IKAL…IHKD).

The protein is TPR repeat-containing protein MJ0941 of Methanocaldococcus jannaschii (strain ATCC 43067 / DSM 2661 / JAL-1 / JCM 10045 / NBRC 100440) (Methanococcus jannaschii).